The primary structure comprises 284 residues: MTAHLIDGKAIAANLRKQIAQRVEERRQQGLRTPGLAVILVGTDPASQVYVSHKRKDCEEVGFISQAFDLPSETTQQALTELIDRLNDDPAVDGILLQLPLPAHLDASLLLERIRPDKDVDGFHPYNIGRLAQRIPLLRPCTPKGIMTLLESTGQDLYGMNAVIVGASNIVGRPMAMELLLAGCTVTVCHRFTKDLAGHVGRADLVVVAAGKPGLVKGEWVKEGAIVIDVGINRQEDGKLVGDVVYETALPRAGWITPVPGGVGPMTRACLLENTLYAAEELHK.

NADP(+) contacts are provided by residues Gly-166 to Ser-168 and Ile-232.

The protein belongs to the tetrahydrofolate dehydrogenase/cyclohydrolase family. Homodimer.

It catalyses the reaction (6R)-5,10-methylene-5,6,7,8-tetrahydrofolate + NADP(+) = (6R)-5,10-methenyltetrahydrofolate + NADPH. The catalysed reaction is (6R)-5,10-methenyltetrahydrofolate + H2O = (6R)-10-formyltetrahydrofolate + H(+). It functions in the pathway one-carbon metabolism; tetrahydrofolate interconversion. In terms of biological role, catalyzes the oxidation of 5,10-methylenetetrahydrofolate to 5,10-methenyltetrahydrofolate and then the hydrolysis of 5,10-methenyltetrahydrofolate to 10-formyltetrahydrofolate. This chain is Bifunctional protein FolD, found in Pseudomonas putida (strain W619).